We begin with the raw amino-acid sequence, 291 residues long: ATP phosphoribosyltransferase (291 aa).

The protein belongs to the ATP phosphoribosyltransferase family. Long subfamily. Mg(2+) serves as cofactor.

Its subcellular location is the cytoplasm. It catalyses the reaction 1-(5-phospho-beta-D-ribosyl)-ATP + diphosphate = 5-phospho-alpha-D-ribose 1-diphosphate + ATP. The protein operates within amino-acid biosynthesis; L-histidine biosynthesis; L-histidine from 5-phospho-alpha-D-ribose 1-diphosphate: step 1/9. Its activity is regulated as follows. Feedback inhibited by histidine. In terms of biological role, catalyzes the condensation of ATP and 5-phosphoribose 1-diphosphate to form N'-(5'-phosphoribosyl)-ATP (PR-ATP). Has a crucial role in the pathway because the rate of histidine biosynthesis seems to be controlled primarily by regulation of HisG enzymatic activity. This is ATP phosphoribosyltransferase from Desulfosudis oleivorans (strain DSM 6200 / JCM 39069 / Hxd3) (Desulfococcus oleovorans).